The following is a 751-amino-acid chain: Photosystem I P700 chlorophyll a apoprotein A1 (751 aa).

A run of 8 helical transmembrane segments spans residues 71-94 (VFSAHFGQLSIIFLWLSGMYFHGA), 157-180 (LYCTAIGALIFASLMLFAGWFHYH), 196-220 (LNHHLAGLLGLGSLSWAGHQIHVSL), 292-310 (IAHHHLAIAILFLIAGHMY), 347-370 (WHAQLSLNLAMLGSTTIVVAHHMY), 386-412 (LSLFTHHMWIGGFLIVGAAAHAAIFMV), 434-456 (AIISHLNWVCIFLGFHSFGLYIH), and 532-550 (FLVHHIHAFTIHVTVLILL). Residues C574 and C583 each coordinate [4Fe-4S] cluster. Helical transmembrane passes span 590–611 (HVFLGLFWMYNSISVVIFHFSW) and 665–687 (LSAYGLFFLGAHFVWAFSLMFLF). H676 provides a ligand contact to chlorophyll a'. Positions 684 and 692 each coordinate chlorophyll a. Position 693 (W693) interacts with phylloquinone. Residues 725-745 (AVGVTHYLLGGIATTWAFFLA) form a helical membrane-spanning segment.

This sequence belongs to the PsaA/PsaB family. As to quaternary structure, the PsaA/B heterodimer binds the P700 chlorophyll special pair and subsequent electron acceptors. PSI consists of a core antenna complex that captures photons, and an electron transfer chain that converts photonic excitation into a charge separation. The eukaryotic PSI reaction center is composed of at least 11 subunits. It depends on P700 is a chlorophyll a/chlorophyll a' dimer, A0 is one or more chlorophyll a, A1 is one or both phylloquinones and FX is a shared 4Fe-4S iron-sulfur center. as a cofactor.

It is found in the plastid. It localises to the chloroplast thylakoid membrane. The enzyme catalyses reduced [plastocyanin] + hnu + oxidized [2Fe-2S]-[ferredoxin] = oxidized [plastocyanin] + reduced [2Fe-2S]-[ferredoxin]. In terms of biological role, psaA and PsaB bind P700, the primary electron donor of photosystem I (PSI), as well as the electron acceptors A0, A1 and FX. PSI is a plastocyanin-ferredoxin oxidoreductase, converting photonic excitation into a charge separation, which transfers an electron from the donor P700 chlorophyll pair to the spectroscopically characterized acceptors A0, A1, FX, FA and FB in turn. Oxidized P700 is reduced on the lumenal side of the thylakoid membrane by plastocyanin. This Zea mays (Maize) protein is Photosystem I P700 chlorophyll a apoprotein A1.